Reading from the N-terminus, the 340-residue chain is NADH-quinone oxidoreductase subunit H (340 aa).

The next 8 helical transmembrane spans lie at 4–24 (TIGI…PLLL), 78–98 (YLFV…WAVI), 113–133 (VLYL…AGWA), 151–171 (VSYE…AGSM), 184–204 (MLHW…IAGI), 244–264 (SMIL…LSPF), 273–293 (IFFV…FLFV), and 316–336 (VLIP…VAHV).

It belongs to the complex I subunit 1 family. In terms of assembly, NDH-1 is composed of 14 different subunits. Subunits NuoA, H, J, K, L, M, N constitute the membrane sector of the complex.

It localises to the cell inner membrane. The enzyme catalyses a quinone + NADH + 5 H(+)(in) = a quinol + NAD(+) + 4 H(+)(out). In terms of biological role, NDH-1 shuttles electrons from NADH, via FMN and iron-sulfur (Fe-S) centers, to quinones in the respiratory chain. The immediate electron acceptor for the enzyme in this species is believed to be ubiquinone. Couples the redox reaction to proton translocation (for every two electrons transferred, four hydrogen ions are translocated across the cytoplasmic membrane), and thus conserves the redox energy in a proton gradient. This subunit may bind ubiquinone. This is NADH-quinone oxidoreductase subunit H from Legionella pneumophila (strain Paris).